Reading from the N-terminus, the 746-residue chain is Polyribonucleotide nucleotidyltransferase (746 aa).

2 residues coordinate Mg(2+): aspartate 493 and aspartate 499. Residues 560–619 (PRIITLQINPEKIGALIGPGGKTIRSITEATGAQIDIEEDGRVYISTADAAAAQQAVAMV) form the KH domain. Positions 629-698 (GDIFLGKVVR…GTGKVSLSRR (70 aa)) constitute an S1 motif domain. Residues 704 to 746 (ETAEDRRAAGAGRGLRDGGRSSGSERSGDRSPRSDDRPRPRRR) form a disordered region. 2 stretches are compositionally biased toward basic and acidic residues: residues 706-722 (AEDRRAAGAGRGLRDGG) and 729-746 (RSGDRSPRSDDRPRPRRR).

This sequence belongs to the polyribonucleotide nucleotidyltransferase family. It depends on Mg(2+) as a cofactor.

It localises to the cytoplasm. The enzyme catalyses RNA(n+1) + phosphate = RNA(n) + a ribonucleoside 5'-diphosphate. In terms of biological role, involved in mRNA degradation. Catalyzes the phosphorolysis of single-stranded polyribonucleotides processively in the 3'- to 5'-direction. The protein is Polyribonucleotide nucleotidyltransferase of Roseiflexus castenholzii (strain DSM 13941 / HLO8).